A 615-amino-acid polypeptide reads, in one-letter code: MSKKFAHTQEELEKLSLKELENLAASMREKIIQVVSKNGGHLSSNLGAVELSIAMHLVFDAKKDPFIFDVSHQSYTHKLLSGKEEIFDTLRQINGLSGYTKPSEGDYFVAGHSSTSISLAVGACKAIALKGEKRIPVALIGDGALSAGMAYEALNELGDSKFPCVILLNDNEMSISKPIGAISKYLSQAMATQFYQSFKKRIAKMLDILPDSATYMAKRFEESFKLITPGLLFEELGLEYIGPIDGHNLGEIISALKQAKAMQKPCVIHTQTIKGKGYALAEGKHAKWHGVGAFDIDSGESVKKSDTKKSATEIFSKNLLDLASKYENIVGVTAAMPSGTGLDKLIEKYPNRFWDVAIAEQHAVTSMAAMAKEGFKPFIAIYSTFLQRAYDQVIHDCAIMNLNVVFAMDRAGIVGEDGETHQGVFDLSFLAPLPNFTLLAPRDEQMMQNIMEYAYLHQGPIAFRYPRGSFILDKEFNPCEIKLGKAQWLVKNSSEIAFLGYGQGVAKAWQVLRALQEMNNNANLIDLIFAKPLDEELLCELAKKSKIWFIFSENVKIGGIESLINNFLQKYDLHVKVVSFEYEDKFIEHGKTSEVEKNLEKDVNSLLTKVLKFYH.

Residues His72 and 111 to 113 (GHS) contribute to the thiamine diphosphate site. Asp142 contacts Mg(2+). Thiamine diphosphate is bound by residues 143–144 (GA), Asn171, Tyr278, and Glu360. Asn171 contributes to the Mg(2+) binding site.

The protein belongs to the transketolase family. DXPS subfamily. Homodimer. The cofactor is Mg(2+). Thiamine diphosphate is required as a cofactor.

The enzyme catalyses D-glyceraldehyde 3-phosphate + pyruvate + H(+) = 1-deoxy-D-xylulose 5-phosphate + CO2. Its pathway is metabolic intermediate biosynthesis; 1-deoxy-D-xylulose 5-phosphate biosynthesis; 1-deoxy-D-xylulose 5-phosphate from D-glyceraldehyde 3-phosphate and pyruvate: step 1/1. In terms of biological role, catalyzes the acyloin condensation reaction between C atoms 2 and 3 of pyruvate and glyceraldehyde 3-phosphate to yield 1-deoxy-D-xylulose-5-phosphate (DXP). This chain is 1-deoxy-D-xylulose-5-phosphate synthase, found in Campylobacter jejuni subsp. jejuni serotype O:23/36 (strain 81-176).